The chain runs to 141 residues: Transcriptional regulator MraZ (141 aa).

2 consecutive SpoVT-AbrB domains span residues 5–47 (EFEH…PAER) and 76–119 (AAEC…GAEH).

It belongs to the MraZ family. Forms oligomers.

It is found in the cytoplasm. The protein resides in the nucleoid. The chain is Transcriptional regulator MraZ from Lactiplantibacillus plantarum (strain ATCC BAA-793 / NCIMB 8826 / WCFS1) (Lactobacillus plantarum).